A 536-amino-acid chain; its full sequence is MAEADPKMVTEPAAQGVAEEAMASSACDSGDESDSNSSSSTTSCGSTGSSSSSSSSSSSSSSSSSGSSGSSSNGSHLHQKKRVPGPSRRAQRRPSGKLFMDKLPQAVRNRVQALRNIQNECDKVDTLFLRAIHDLERKYAELNKPLYDKRFQIINAEYEPTEEECEWNSEEEFSGDEEMQDDTPNEMPPLEGEEEEEIGKENTEVKEEVKDVPEEVPEAKVEEEEAPKETSEVKTEEKEIPKEGPEEKAEEQESSKEFPEVKVEEKTDSTDCIDIAPEEKEDLKDVTQANAEYTDQPTEDSTPRAPVREAQKRVPETRPEERVNIKRARKGKPKKEDPPRGIPDYWLTVLKNVDKLGPMIQKCDEPILKFLSDVSLKFSNPGQPISYTFEFHFLPNPYFRNELLMKTYIIRSKPDHYDPFFAWGWEIEECKGCKIDWRRGKDVTVTTRSRPAITGEIEVQPRVVPNASFFNFFSPPEIPLIGKLEPKEDAILDEDFEIGQILHDNVILKSIYYFTGEINDPYYHDFRDYGNRKYYK.

Disordered regions lie at residues 1–104 and 160–338; these read MAEA…DKLP and PTEE…KEDP. Residues 35–75 are compositionally biased toward low complexity; it reads SNSSSSTTSCGSTGSSSSSSSSSSSSSSSSSGSSGSSSNGS. A compositionally biased stretch (basic residues) spans 77-95; it reads LHQKKRVPGPSRRAQRRPS. Positions 160-184 are enriched in acidic residues; it reads PTEEECEWNSEEEFSGDEEMQDDTP. Composition is skewed to basic and acidic residues over residues 199 to 220 and 227 to 269; these read GKEN…PEAK and PKET…KTDS. Over residues 287–300 the composition is skewed to polar residues; sequence TQANAEYTDQPTED. Positions 306-324 are enriched in basic and acidic residues; that stretch reads PVREAQKRVPETRPEERVN.

The protein belongs to the nucleosome assembly protein (NAP) family.

The protein resides in the nucleus. The sequence is that of Nucleosome assembly protein 1-like 3 (Nap1l3) from Rattus norvegicus (Rat).